Reading from the N-terminus, the 219-residue chain is Leukocyte surface antigen CD53 (219 aa).

Over 2 to 11 (GMSSLKLLKY) the chain is Cytoplasmic. Residues 12-32 (VLFFFNFLFWVCGCCILGFGI) traverse the membrane as a helical segment. The Extracellular portion of the chain corresponds to 33-54 (HLLVQNTYGILFRNLPFLTLGN). A helical membrane pass occupies residues 55-69 (VLVIVGSIIMVVAFL). Residues 70–80 (GCMGSIKENKC) are Cytoplasmic-facing. The helical transmembrane segment at 81–106 (LLMSFFVLLLLILLAEVTLAILLFVY) threads the bilayer. Over 107–181 (EKKINTLVAE…KKGQAWFHSN (75 aa)) the chain is Extracellular. N-linked (GlcNAc...) asparagine glycosylation is found at Asn-119, Asn-129, and Asn-148. A helical membrane pass occupies residues 182 to 206 (FLYIGIVTICVCVIQVLGMSFALTL). Residues 207 to 219 (NCQIDKTSQALGL) lie on the Cytoplasmic side of the membrane.

The protein belongs to the tetraspanin (TM4SF) family. As to quaternary structure, interacts with SCIMP. Interacts with CD45/PTPRC. Interacts with IL7R. Interacts with RBL2 and PPP2CA. Spleen and thymus, B-cells, monocytes, macrophages, neutrophils, single (CD4 or CD8) positive thymocytes, peripheral T-cells.

The protein localises to the cell membrane. It localises to the cell junction. It is found in the membrane. In terms of biological role, required for efficient formation of myofibers in regenerating muscle at the level of cell fusion. May be involved in growth regulation in hematopoietic cells. The chain is Leukocyte surface antigen CD53 (Cd53) from Rattus norvegicus (Rat).